The sequence spans 144 residues: Transcription antitermination protein NusB (144 aa).

It belongs to the NusB family.

Involved in transcription antitermination. Required for transcription of ribosomal RNA (rRNA) genes. Binds specifically to the boxA antiterminator sequence of the ribosomal RNA (rrn) operons. The chain is Transcription antitermination protein NusB from Histophilus somni (strain 2336) (Haemophilus somnus).